The primary structure comprises 332 residues: D-amino acid oxidase (332 aa).

The FAD site is built by Ala8, Gly9, Ile10, Thr39, Thr40, Ala45, Gly46, Leu47, Val161, and Ser180. D-proline contacts are provided by Tyr218 and Arg274. D-serine contacts are provided by Tyr218 and Arg274. Residues Arg274, Gly305, Gly306, Gly308, and Thr310 each contribute to the FAD site. Position 306 (Gly306) interacts with D-proline. A D-serine-binding site is contributed by Gly306. The short motif at 330 to 332 (AKL) is the Microbody targeting signal element.

It belongs to the DAMOX/DASOX family. It depends on FAD as a cofactor.

The protein localises to the peroxisome matrix. The enzyme catalyses a D-alpha-amino acid + O2 + H2O = a 2-oxocarboxylate + H2O2 + NH4(+). It carries out the reaction D-alanine + O2 + H2O = pyruvate + H2O2 + NH4(+). The catalysed reaction is D-arginine + O2 + H2O = 5-guanidino-2-oxopentanoate + H2O2 + NH4(+). It catalyses the reaction D-asparagine + O2 + H2O = 2-oxosuccinamate + H2O2 + NH4(+). The enzyme catalyses D-cysteine + O2 + H2O = 2-oxo-3-sulfanylpropanoate + H2O2 + NH4(+). It carries out the reaction D-glutamine + O2 + H2O = 2-oxoglutaramate + H2O2 + NH4(+). The catalysed reaction is D-isoleucine + O2 + H2O = (R)-3-methyl-2-oxopentanoate + H2O2 + NH4(+). It catalyses the reaction D-leucine + O2 + H2O = 4-methyl-2-oxopentanoate + H2O2 + NH4(+). The enzyme catalyses D-lysine + O2 + H2O = 6-amino-2-oxohexanoate + H2O2 + NH4(+). It carries out the reaction D-methionine + O2 + H2O = 4-methylsulfanyl-2-oxobutanoate + H2O2 + NH4(+). The catalysed reaction is D-phenylalanine + O2 + H2O = 3-phenylpyruvate + H2O2 + NH4(+). It catalyses the reaction D-proline + O2 = 1-pyrroline-2-carboxylate + H2O2. The enzyme catalyses D-valine + O2 + H2O = 3-methyl-2-oxobutanoate + H2O2 + NH4(+). It carries out the reaction D-histidine + O2 + H2O = 3-(imidazol-5-yl)pyruvate + H2O2 + NH4(+). The catalysed reaction is D-tyrosine + O2 + H2O = 3-(4-hydroxyphenyl)pyruvate + H2O2 + NH4(+). It catalyses the reaction D-serine + O2 + H2O = 3-hydroxypyruvate + H2O2 + NH4(+). The enzyme catalyses D-threonine + O2 + H2O = (S)-3-hydroxy-2-oxobutanoate + H2O2 + NH4(+). It carries out the reaction D-tryptophan + O2 + H2O = indole-3-pyruvate + H2O2 + NH4(+). Catalyzes the oxidative deamination of D-amino acids with broad substrate specificity. Could be responsible for the degradation of diet-derived D-alanine in the intestine. Maintains the asexual state of worms and represses early ovarian development. Following sexual induction, the enzyme is required for differentiation of oogonia into oocytes in the developing ovaries. This is D-amino acid oxidase from Dugesia ryukyuensis (Freshwater planarian flatworm).